Consider the following 321-residue polypeptide: Lipoyl synthase (321 aa).

The [4Fe-4S] cluster site is built by Cys68, Cys73, Cys79, Cys94, Cys98, Cys101, and Ser308. A Radical SAM core domain is found at 80 to 297; sequence FNHGTATFMI…KAEAMAMGFT (218 aa).

This sequence belongs to the radical SAM superfamily. Lipoyl synthase family. Requires [4Fe-4S] cluster as cofactor.

It localises to the cytoplasm. It catalyses the reaction [[Fe-S] cluster scaffold protein carrying a second [4Fe-4S](2+) cluster] + N(6)-octanoyl-L-lysyl-[protein] + 2 oxidized [2Fe-2S]-[ferredoxin] + 2 S-adenosyl-L-methionine + 4 H(+) = [[Fe-S] cluster scaffold protein] + N(6)-[(R)-dihydrolipoyl]-L-lysyl-[protein] + 4 Fe(3+) + 2 hydrogen sulfide + 2 5'-deoxyadenosine + 2 L-methionine + 2 reduced [2Fe-2S]-[ferredoxin]. It functions in the pathway protein modification; protein lipoylation via endogenous pathway; protein N(6)-(lipoyl)lysine from octanoyl-[acyl-carrier-protein]: step 2/2. Its function is as follows. Catalyzes the radical-mediated insertion of two sulfur atoms into the C-6 and C-8 positions of the octanoyl moiety bound to the lipoyl domains of lipoate-dependent enzymes, thereby converting the octanoylated domains into lipoylated derivatives. The sequence is that of Lipoyl synthase from Klebsiella pneumoniae (strain 342).